A 785-amino-acid polypeptide reads, in one-letter code: Endonuclease MutS2 (785 aa).

335 to 342 (GPNTGGKT) serves as a coordination point for ATP. A Smr domain is found at 710–785 (LDLRGERYEN…GSGVTIVELK (76 aa)).

This sequence belongs to the DNA mismatch repair MutS family. MutS2 subfamily. As to quaternary structure, homodimer. Binds to stalled ribosomes, contacting rRNA.

Endonuclease that is involved in the suppression of homologous recombination and thus may have a key role in the control of bacterial genetic diversity. In terms of biological role, acts as a ribosome collision sensor, splitting the ribosome into its 2 subunits. Detects stalled/collided 70S ribosomes which it binds and splits by an ATP-hydrolysis driven conformational change. Acts upstream of the ribosome quality control system (RQC), a ribosome-associated complex that mediates the extraction of incompletely synthesized nascent chains from stalled ribosomes and their subsequent degradation. Probably generates substrates for RQC. In Bacillus velezensis (strain DSM 23117 / BGSC 10A6 / LMG 26770 / FZB42) (Bacillus amyloliquefaciens subsp. plantarum), this protein is Endonuclease MutS2.